A 509-amino-acid polypeptide reads, in one-letter code: Bifunctional pantoate ligase/cytidylate kinase (509 aa).

A pantoate--beta-alanine ligase region spans residues M1 to V275. M29–H36 contributes to the ATP binding site. H36 functions as the Proton donor in the catalytic mechanism. Q61 lines the (R)-pantoate pocket. A beta-alanine-binding site is contributed by Q61. ATP is bound at residue G149 to D152. (R)-pantoate is bound at residue Q155. Position 186–189 (L186–R189) interacts with ATP. A cytidylate kinase region spans residues F276 to K509.

It in the N-terminal section; belongs to the pantothenate synthetase family. In the C-terminal section; belongs to the cytidylate kinase family. Type 1 subfamily.

The protein localises to the cytoplasm. It catalyses the reaction (R)-pantoate + beta-alanine + ATP = (R)-pantothenate + AMP + diphosphate + H(+). It carries out the reaction CMP + ATP = CDP + ADP. The enzyme catalyses dCMP + ATP = dCDP + ADP. It functions in the pathway cofactor biosynthesis; (R)-pantothenate biosynthesis; (R)-pantothenate from (R)-pantoate and beta-alanine: step 1/1. Functionally, catalyzes the condensation of pantoate with beta-alanine in an ATP-dependent reaction via a pantoyl-adenylate intermediate. In terms of biological role, catalyzes the transfer of a phosphate group from ATP to either CMP or dCMP to form CDP or dCDP and ADP, respectively. This is Bifunctional pantoate ligase/cytidylate kinase from Prochlorococcus marinus (strain AS9601).